The sequence spans 348 residues: MNGTEGPNFYVPFSNKTGVVRSPFEAPQYYLAEPWQFSMLAAYMFLLIVLGFPINFLTLYVTVQHKKLRTPLNYILLNLAVADLFMVFGGFTTTLYTSLHGYFVFGPTGCNLEGFFATLGGEIALWSLVVLAIERYVVVCKPMSNFRFGENHAIMGVAFTWVMALACAAPPLVGWSRYIPQGMQCSCGALYFTLKPEINNESFVIYMFVVHFSIPLIVIFFCYGQLVFTVKEAAAQQQESATTQKAEKEVTRMVIIMVIAFLICWLPYAGVAFYIFTHQGSDFGPIFMTIPAFFAKSSSVYNPVIYIMMNKQFRNCMLTTLCCGKNPLGDDEASTTVSKTETSQVAPA.

M1 carries the post-translational modification N-acetylmethionine. Residues 1–36 lie on the Extracellular side of the membrane; it reads MNGTEGPNFYVPFSNKTGVVRSPFEAPQYYLAEPWQ. N2 and N15 each carry an N-linked (GlcNAc...) asparagine glycan. The chain crosses the membrane as a helical span at residues 37-61; that stretch reads FSMLAAYMFLLIVLGFPINFLTLYV. At 62-73 the chain is on the cytoplasmic side; the sequence is TVQHKKLRTPLN. The helical transmembrane segment at 74–96 threads the bilayer; the sequence is YILLNLAVADLFMVFGGFTTTLY. Residues 97–110 are Extracellular-facing; that stretch reads TSLHGYFVFGPTGC. C110 and C187 are oxidised to a cystine. Residues 111 to 133 form a helical membrane-spanning segment; sequence NLEGFFATLGGEIALWSLVVLAI. A 'Ionic lock' involved in activated form stabilization motif is present at residues 134–136; that stretch reads ERY. Residues 134–152 lie on the Cytoplasmic side of the membrane; sequence ERYVVVCKPMSNFRFGENH. Residues 153-173 traverse the membrane as a helical segment; the sequence is AIMGVAFTWVMALACAAPPLV. Topologically, residues 174 to 202 are extracellular; the sequence is GWSRYIPQGMQCSCGALYFTLKPEINNES. A Zn(2+)-binding site is contributed by E201. The chain crosses the membrane as a helical span at residues 203–224; that stretch reads FVIYMFVVHFSIPLIVIFFCYG. Residues 225 to 252 lie on the Cytoplasmic side of the membrane; sequence QLVFTVKEAAAQQQESATTQKAEKEVTR. Residues 253-274 form a helical membrane-spanning segment; the sequence is MVIIMVIAFLICWLPYAGVAFY. The Extracellular portion of the chain corresponds to 275 to 286; the sequence is IFTHQGSDFGPI. Q279 contributes to the Zn(2+) binding site. The helical transmembrane segment at 287-308 threads the bilayer; sequence FMTIPAFFAKSSSVYNPVIYIM. The residue at position 296 (K296) is an N6-(retinylidene)lysine. The Cytoplasmic portion of the chain corresponds to 309–348; that stretch reads MNKQFRNCMLTTLCCGKNPLGDDEASTTVSKTETSQVAPA. Residues C322 and C323 are each lipidated (S-palmitoyl cysteine). The segment at 330–348 is interaction with SAG; it reads DDEASTTVSKTETSQVAPA. The residue at position 334 (S334) is a Phosphoserine. Position 334 is a phosphoserine; by RK and GRK7 (S334). Phosphothreonine occurs at positions 335 and 336. Phosphothreonine; by RK and GRK7 is present on residues T335 and T336. S338 is subject to Phosphoserine; by RK and GRK7. Phosphothreonine is present on residues T340 and T342. The residue at position 343 (S343) is a Phosphoserine; by RK and GRK7.

It belongs to the G-protein coupled receptor 1 family. Opsin subfamily. Homodimer. May form a complex composed of RHO, GRK1 and RCVRN in a Ca(2+)-dependent manner; RCVRN prevents the interaction between GRK1 and RHO. Interacts with GRK1. Interacts (phosphorylated form) with SAG. Interacts with GNAT1. Interacts with GNAT3. SAG and G-proteins compete for a common binding site. Interacts with PRCD; the interaction promotes PRCD stability. Forms a complex with ASAP1 and ARF4. Forms a complex with ASAP1, RAB11A, Rabin8/RAB3IP, ARF4 and RAB11FIP3; the complex regulates Golgi-to-cilia rhodopsin/RHO transport in photoreceptors. Post-translationally, phosphorylated on some or all of the serine and threonine residues present in the C-terminal region. Contains one covalently linked retinal chromophore. Upon light absorption, the covalently bound 11-cis-retinal is converted to all-trans-retinal. After hydrolysis of the Schiff base and release of the covalently bound all-trans-retinal, active rhodopsin is regenerated by binding of a fresh molecule of 11-cis-retinal.

The protein localises to the membrane. It localises to the cell projection. Its subcellular location is the cilium. The protein resides in the photoreceptor outer segment. In terms of biological role, photoreceptor required for image-forming vision at low light intensity. Required for photoreceptor cell viability after birth. Light-induced isomerization of 11-cis to all-trans retinal triggers a conformational change that activates signaling via G-proteins. Subsequent receptor phosphorylation mediates displacement of the bound G-protein alpha subunit by the arrestin SAG and terminates signaling. The protein is Rhodopsin (RHO) of Ovis aries (Sheep).